The chain runs to 208 residues: Calcyphosin-like protein (208 aa).

EF-hand domains follow at residues 39 to 74 (AGIK…YAVV), 75 to 110 (MEKE…PMSR), 111 to 146 (ARKE…KHHP), and 154 to 191 (SEEQ…VSAS). The Ca(2+) site is built by D52, D54, N56, T58, E63, D88, D90, N92, T94, and E99.

It localises to the cytoplasm. This is Calcyphosin-like protein (CAPSL) from Homo sapiens (Human).